Here is a 214-residue protein sequence, read N- to C-terminus: Ras-like protein rasZ (214 aa).

16–23 provides a ligand contact to GTP; sequence GDGGVGKT. The Effector region motif lies at 38-46; the sequence is YDPTIEDSY. Residues 63–67 and 122–125 each bind GTP; these read DTAGQ and NKSD. Cys-211 is subject to Cysteine methyl ester. A lipid anchor (S-geranylgeranyl cysteine) is attached at Cys-211. Residues 212–214 constitute a propeptide, removed in mature form; that stretch reads KMM.

This sequence belongs to the small GTPase superfamily. Ras family.

It localises to the cell membrane. It catalyses the reaction GTP + H2O = GDP + phosphate + H(+). Its function is as follows. Ras proteins bind GDP/GTP and possess intrinsic GTPase activity. The protein is Ras-like protein rasZ (rasZ) of Dictyostelium discoideum (Social amoeba).